Here is a 132-residue protein sequence, read N- to C-terminus: GLSDSEKSAVASLWEKIAPQTNKLGAESMERLFKNHPETKSFFSRFDISPGSQDLLTHGGKIFGALGEAIKSLDNLQKYQDLHTNKLKLSSDHMKLLSAAIIEVFTAHFGGEVNQAAWNKFLGEVGAILTSS.

One can recognise a Globin domain in the interval 1–132 (GLSDSEKSAV…GEVGAILTSS (132 aa)). Positions 58 and 83 each coordinate heme b.

This sequence belongs to the globin family. In terms of assembly, monomer.

Functionally, this hemoglobin may replace myocardial myoglobin in this amphibian species. The chain is Hemoglobin heart muscle subunit alpha-type from Aquarana catesbeiana (American bullfrog).